The following is a 397-amino-acid chain: Elongation factor Tu (397 aa).

The 197-residue stretch at 10 to 206 (KPHVNIGTIG…AVDSYIPTPE (197 aa)) folds into the tr-type G domain. The G1 stretch occupies residues 19–26 (GHVDHGKT). 19 to 26 (GHVDHGKT) provides a ligand contact to GTP. Threonine 26 serves as a coordination point for Mg(2+). Residues 60-64 (GITIN) form a G2 region. The segment at 81–84 (DCPG) is G3. GTP contacts are provided by residues 81–85 (DCPGH) and 136–139 (NKAD). Positions 136 to 139 (NKAD) are G4. Residues 174-176 (SAL) form a G5 region.

Belongs to the TRAFAC class translation factor GTPase superfamily. Classic translation factor GTPase family. EF-Tu/EF-1A subfamily. In terms of assembly, monomer.

Its subcellular location is the cytoplasm. It catalyses the reaction GTP + H2O = GDP + phosphate + H(+). Its function is as follows. GTP hydrolase that promotes the GTP-dependent binding of aminoacyl-tRNA to the A-site of ribosomes during protein biosynthesis. The polypeptide is Elongation factor Tu (Clostridium beijerinckii (strain ATCC 51743 / NCIMB 8052) (Clostridium acetobutylicum)).